The primary structure comprises 224 residues: Small ribosomal subunit protein uS5 (224 aa).

Residues 1–40 form a disordered region; it reads MAEQPAGGQGAGDSRDSRGDRDSRGRRGDGGRGGRDRDGD. Over residues 13–40 the composition is skewed to basic and acidic residues; that stretch reads DSRDSRGDRDSRGRRGDGGRGGRDRDGD. The S5 DRBM domain occupies 44 to 107; that stretch reads YLERVVAINR…EEARKGFFRV (64 aa).

The protein belongs to the universal ribosomal protein uS5 family. As to quaternary structure, part of the 30S ribosomal subunit. Contacts proteins S4 and S8.

With S4 and S12 plays an important role in translational accuracy. Its function is as follows. Located at the back of the 30S subunit body where it stabilizes the conformation of the head with respect to the body. This is Small ribosomal subunit protein uS5 from Mycolicibacterium paratuberculosis (strain ATCC BAA-968 / K-10) (Mycobacterium paratuberculosis).